The sequence spans 337 residues: MSVIETATVPLAQQQADALLNVKDLRVTFSTPDGDVTAVNDLNFSLRAGETLGIVGESGSGKSQTAFALMGLLAANGRIGGSATFNGREILNLPEHELNKLRAEQISMIFQDPMTSLNPYMRVGEQLMEVLMLHKNMSKAEAFEESVRMLDAVKMPEARKRMKMYPHEFSGGMRQRVMIAMALLCRPKLLIADEPTTALDVTVQAQIMTLLNELKREFNTAIIMITHDLVVVAGICDKVLVMYAGRTMEYGNARDVFYQPVHPYSIGLLNAVPRLDAEGETMLTIPGNPPNLLRLPKGCPFQPRCPHAMEICSSAPPLEEFTPGRLRACFKPVEELL.

Residues 20–269 (LNVKDLRVTF…PVHPYSIGLL (250 aa)) enclose the ABC transporter domain. Residue 56 to 63 (GESGSGKS) participates in ATP binding.

This sequence belongs to the ABC transporter superfamily. In terms of assembly, the complex is composed of two ATP-binding proteins (OppD and OppF), two transmembrane proteins (OppB and OppC) and a solute-binding protein (OppA or MppA).

It is found in the cell inner membrane. It carries out the reaction a [peptide](out) + ATP + H2O = a [peptide](in) + ADP + phosphate + H(+). The catalysed reaction is L-alanyl-gamma-D-glutamyl-meso-2,6-diaminopimelate(out) + ATP + H2O = L-alanyl-gamma-D-glutamyl-meso-2,6-diaminopimelate(in) + ADP + phosphate + H(+). Functionally, part of the ABC transporter complex OppABCDF involved in the uptake of oligopeptides and of the ABC transporter complex MppA-OppBCDF involved in the uptake of the cell wall murein tripeptide L-alanyl-gamma-D-glutamyl-meso-diaminopimelate. Probably responsible for energy coupling to the transport system. Plays an important nutritional role and is involved in the recycling of cell wall peptides. This Escherichia coli (strain K12) protein is Oligopeptide transport ATP-binding protein OppD (oppD).